Here is a 332-residue protein sequence, read N- to C-terminus: Ferredoxin--NADP reductase 2 (332 aa).

Residues Glu37, Gln45, Tyr50, Val90, Phe124, Asp285, and Thr326 each coordinate FAD.

This sequence belongs to the ferredoxin--NADP reductase type 2 family. Homodimer. FAD is required as a cofactor.

It catalyses the reaction 2 reduced [2Fe-2S]-[ferredoxin] + NADP(+) + H(+) = 2 oxidized [2Fe-2S]-[ferredoxin] + NADPH. In Bacillus subtilis (strain 168), this protein is Ferredoxin--NADP reductase 2 (yumC).